We begin with the raw amino-acid sequence, 116 residues long: Large ribosomal subunit protein bL21c (116 aa).

The protein belongs to the bacterial ribosomal protein bL21 family. Part of the 50S ribosomal subunit.

The protein resides in the plastid. The protein localises to the chloroplast. This protein binds to 23S rRNA. The sequence is that of Large ribosomal subunit protein bL21c from Emiliania huxleyi (Coccolithophore).